We begin with the raw amino-acid sequence, 707 residues long: MASVFKVRSASGHVPVVRTLAAMMAVTVVLTACHGGGDNHPPPQANVLPAFITASSVRTQFYDGNTDDLLTAGLGKTGLASATAPAIANAAQPTAAELRRLAIWSNYRALVDMTANGGYGRFWGPNVDLNGNDTLGEGKIAGKEYLAFADDGSGTQNVTVLVQIPASFNPDQPCIVTATSSGSRGVYGAISAAGEWGLKRGCAVAYTDKGSGNGAHELSSSLVTLIDGTLQNATAAGKASLFTANLGNTDLASYNSRFPNRYAFKHAHSQQNPEKDWGRNTLQAIQFAYWALNDSYGTLNGSTRNVRYTSGSITTIAASVSNGGGASLAAAEQDTSGLITAVVVGEPQINLRLPAQVSVAQGGVPVGAFGKPLADYMTLANMLQPCAALAPAAAGAPYLTALPGATTTSIRTARCASLAAAGVIAGADATTQATNALALLHQNGYQTDSDLLQAPMWDSQAVPAVAVTYADAYAKASVTANLCNFSFGTTNAAGTAGVTPAVSPMLTVFGNGNGVPPTNGINLVFNSGAGAADHRLATADGSYAGASCLRTLWTNGTLTGSVDAIRVNANLHGKPAIIVQGRADALVPINHASRPYLGLNQLSEGAASRLSFYEVTNAQHFDAFLGVAGFDSRFVPLHYYNLQALNLMWSHLKNGTPLPPSQVIHTVPRGGTPGAAPALTTANLPPIVASPGINAITAANGAVNVPN.

The first 32 residues, 1–32 (MASVFKVRSASGHVPVVRTLAAMMAVTVVLTA), serve as a signal peptide directing secretion. S321 serves as the catalytic Charge relay system.

Belongs to the D-(-)-3-hydroxybutyrate oligomer hydrolase family.

It is found in the secreted. The catalysed reaction is (3R)-hydroxybutanoate dimer + H2O = 2 (R)-3-hydroxybutanoate + H(+). It functions in the pathway lipid metabolism; butanoate metabolism. Its function is as follows. Participates in the degradation of poly-3-hydroxybutyrate (PHB). It works downstream of poly(3-hydroxybutyrate) depolymerase, hydrolyzing D(-)-3-hydroxybutyrate oligomers of various length (3HB-oligomers) into 3HB-monomers. The polypeptide is D-(-)-3-hydroxybutyrate oligomer hydrolase (Paraburkholderia xenovorans (strain LB400)).